A 222-amino-acid chain; its full sequence is Ras-related protein Rab-21 (222 aa).

A2 is modified (N-acetylalanine). 10 residues coordinate GTP: G26, G29, K30, T31, S32, N43, D44, H46, T48, and T49. T31 is a binding site for Mg(2+). The Switch 1 motif lies at 41–54; it reads KFNDKHITTLQASF. Mg(2+) contacts are provided by T49 and D72. Residues 74-92 carry the Switch 2 motif; that stretch reads AGQERFHALGPIYYRDSNG. GTP contacts are provided by G75, N130, K131, D133, A161, and K162. S-geranylgeranyl cysteine attachment occurs at residues C218 and C219. Position 219 is a cysteine methyl ester (C219). Residues 220-222 constitute a propeptide, removed in mature form; it reads SSG.

It belongs to the small GTPase superfamily. Rab family. Interacts with the cytoplasmic tail of integrins ITGA1, ITGA2, ITGA5, ITGA6, ITGA11 and ITGB1; this interaction is dependent upon its GDP/GTP cycle. Interacts with RABGEF1 (via VPS9 domain). Interacts with ANKRD27. Interacts with VAMP7. Interacts (in GTP-bound form) with VAMP8 in response to starvation; the interaction probably regulates VAMP8 endolysosomal trafficking. Interacts (active GTP-bound form) with TMED10; the interaction is indirect and regulates TMED10 abundance and localization at the Golgi. Requires Mg(2+) as cofactor.

The protein localises to the endoplasmic reticulum membrane. Its subcellular location is the golgi apparatus. It is found in the trans-Golgi network. It localises to the golgi apparatus membrane. The protein resides in the early endosome membrane. The protein localises to the cytoplasmic vesicle membrane. Its subcellular location is the cleavage furrow. It is found in the cell projection. It localises to the neuron projection. It carries out the reaction GTP + H2O = GDP + phosphate + H(+). Regulated by guanine nucleotide exchange factors (GEFs) including ANKRD27 and RABGEF1, which promote the exchange of bound GDP for free GTP. Regulated by GTPase activating proteins (GAPs) which increase the GTP hydrolysis activity. Inhibited by GDP dissociation inhibitors (GDIs). The small GTPases Rab are key regulators of intracellular membrane trafficking, from the formation of transport vesicles to their fusion with membranes. Rabs cycle between an inactive GDP-bound form and an active GTP-bound form that is able to recruit to membranes different sets of downstream effectors directly responsible for vesicle formation, movement, tethering and fusion. RAB21 is involved in membrane trafficking control. Regulates integrin internalization and recycling, but does not influence the traffic of endosomally translocated receptors in general. As a result, may regulate cell adhesion and migration. During the mitosis of adherent cells, controls the endosomal trafficking of integrins which is required for the successful completion of cytokinesis. Involved in neurite growth. Following SBF2/MTMT13-mediated activation in response to starvation-induced autophagy, binds to and regulates SNARE protein VAMP8 endolysosomal transport required for SNARE-mediated autophagosome-lysosome fusion. Modulates protein levels of the cargo receptors TMED2 and TMED10, and required for appropriate Golgi localization of TMED10. This is Ras-related protein Rab-21 from Mus musculus (Mouse).